The following is a 322-amino-acid chain: UDP-N-acetylenolpyruvoylglucosamine reductase (322 aa).

An FAD-binding PCMH-type domain is found at 36-202 (RAGGPAQVLF…TSVLFEGVPG (167 aa)). Arg-182 is an active-site residue. Residue Ser-231 is the Proton donor of the active site. Glu-301 is a catalytic residue.

Belongs to the MurB family. FAD serves as cofactor.

The protein localises to the cytoplasm. It catalyses the reaction UDP-N-acetyl-alpha-D-muramate + NADP(+) = UDP-N-acetyl-3-O-(1-carboxyvinyl)-alpha-D-glucosamine + NADPH + H(+). It participates in cell wall biogenesis; peptidoglycan biosynthesis. Its function is as follows. Cell wall formation. In Brucella abortus (strain S19), this protein is UDP-N-acetylenolpyruvoylglucosamine reductase.